Consider the following 536-residue polypeptide: Ribulokinase (536 aa).

It belongs to the ribulokinase family.

It catalyses the reaction D-ribulose + ATP = D-ribulose 5-phosphate + ADP + H(+). The catalysed reaction is L-ribulose + ATP = L-ribulose 5-phosphate + ADP + H(+). It participates in carbohydrate degradation; L-arabinose degradation via L-ribulose; D-xylulose 5-phosphate from L-arabinose (bacterial route): step 2/3. This is Ribulokinase from Staphylococcus epidermidis (strain ATCC 12228 / FDA PCI 1200).